The sequence spans 392 residues: Outer membrane protein assembly factor BamB (392 aa).

The first 19 residues, 1-19 (MQLRKLLLPGLLSVTLLSG), serve as a signal peptide directing secretion. A lipid anchor (N-palmitoyl cysteine) is attached at C20. Residue C20 is the site of S-diacylglycerol cysteine attachment.

The protein belongs to the BamB family. In terms of assembly, part of the Bam complex, which is composed of the outer membrane protein BamA, and four lipoproteins BamB, BamC, BamD and BamE.

It localises to the cell outer membrane. Its function is as follows. Part of the outer membrane protein assembly complex, which is involved in assembly and insertion of beta-barrel proteins into the outer membrane. The chain is Outer membrane protein assembly factor BamB from Shigella dysenteriae serotype 1 (strain Sd197).